Here is a 277-residue protein sequence, read N- to C-terminus: Large ribosomal subunit protein uL2 (277 aa).

Disordered stretches follow at residues 37-60 and 223-264; these read KNST…GHKH and VVMN…NKRT. The segment covering 39–49 has biased composition (polar residues); that stretch reads STAGRNNNGHI. Residues 50–60 show a composition bias toward basic residues; that stretch reads TTRHKGGGHKH. Positions 229–244 are enriched in basic and acidic residues; it reads DHPHGGGEGRTGEARE.

This sequence belongs to the universal ribosomal protein uL2 family. As to quaternary structure, part of the 50S ribosomal subunit. Forms a bridge to the 30S subunit in the 70S ribosome.

Functionally, one of the primary rRNA binding proteins. Required for association of the 30S and 50S subunits to form the 70S ribosome, for tRNA binding and peptide bond formation. It has been suggested to have peptidyltransferase activity; this is somewhat controversial. Makes several contacts with the 16S rRNA in the 70S ribosome. The polypeptide is Large ribosomal subunit protein uL2 (Neisseria meningitidis serogroup B (strain ATCC BAA-335 / MC58)).